The sequence spans 78 residues: Mitochondrial import inner membrane translocase subunit Tim9 (78 aa).

A Twin CX3C motif motif is present at residues 24 to 48; that stretch reads CFTSCVNEFGSRTVNAKEESCANNC. Disulfide bonds link cysteine 24–cysteine 48 and cysteine 28–cysteine 44.

The protein belongs to the small Tim family. As to quaternary structure, heterohexamer; composed of 3 copies of tim-9/tin-9.1 and 3 copies of tim-10/tin-10, named soluble 70 kDa complex. The complex associates with the tim-22 component of the TIM22 complex. Interacts with multi-pass transmembrane proteins in transit.

It is found in the mitochondrion inner membrane. Its function is as follows. Mitochondrial intermembrane chaperone that participates in the import and insertion of multi-pass transmembrane proteins into the mitochondrial inner membrane. May also be required for the transfer of beta-barrel precursors from the TOM complex to the sorting and assembly machinery (SAM complex) of the outer membrane. Acts as a chaperone-like protein that protects the hydrophobic precursors from aggregation and guide them through the mitochondrial intermembrane space. This is Mitochondrial import inner membrane translocase subunit Tim9 (tin-9.1) from Caenorhabditis briggsae.